The primary structure comprises 242 residues: Small ribosomal subunit protein uS3 (242 aa).

The KH type-2 domain occupies 39-110; that stretch reads IRKFIHKKYG…QVRINVVEVE (72 aa). Residues 221–242 form a disordered region; the sequence is GASPRRRASRRPQQFEDRSNEG. Basic and acidic residues predominate over residues 233-242; the sequence is QQFEDRSNEG.

The protein belongs to the universal ribosomal protein uS3 family. In terms of assembly, part of the 30S ribosomal subunit. Forms a tight complex with proteins S10 and S14.

Binds the lower part of the 30S subunit head. Binds mRNA in the 70S ribosome, positioning it for translation. The polypeptide is Small ribosomal subunit protein uS3 (Parasynechococcus marenigrum (strain WH8102)).